The primary structure comprises 78 residues: Short neurotoxin SNTX11 (78 aa).

The first 21 residues, M1–T21, serve as a signal peptide directing secretion. Disulfide bonds link C24/C40, C33/C58, C62/C70, and C71/C76.

Belongs to the three-finger toxin family. Short-chain subfamily. Expressed by the venom gland.

Its subcellular location is the secreted. Functionally, this three-finger toxin binds and inhibits the nicotinic acetylcholine receptor (nAChR). The polypeptide is Short neurotoxin SNTX11 (Ophiophagus hannah (King cobra)).